The primary structure comprises 270 residues: Undecaprenyl-diphosphatase 1 (270 aa).

A run of 6 helical transmembrane segments spans residues 79–99, 105–125, 155–175, 182–202, 215–235, and 242–262; these read NLLLGIVIAFIPAAVAGLLFS, VLFNPVCVAIAFIVGGLIILW, LALIPGTSRSGATIIGGLFLG, TEFSFFLGIPTLGAASLYSLI, VFAVGFIASFVFAFLAIRALL, and SFAVFAWYRIAFGLIVLGTWW.

It belongs to the UppP family.

It is found in the cell inner membrane. The catalysed reaction is di-trans,octa-cis-undecaprenyl diphosphate + H2O = di-trans,octa-cis-undecaprenyl phosphate + phosphate + H(+). Its function is as follows. Catalyzes the dephosphorylation of undecaprenyl diphosphate (UPP). Confers resistance to bacitracin. The polypeptide is Undecaprenyl-diphosphatase 1 (Chromobacterium violaceum (strain ATCC 12472 / DSM 30191 / JCM 1249 / CCUG 213 / NBRC 12614 / NCIMB 9131 / NCTC 9757 / MK)).